The chain runs to 430 residues: Agropine synthesis reductase (430 aa).

203–227 provides a ligand contact to NAD(+); the sequence is LISGPSRGIGKAIAENLIAHGYRMS. S333 is a binding site for substrate. Y346 functions as the Proton acceptor in the catalytic mechanism.

The protein belongs to the short-chain dehydrogenases/reductases (SDR) family.

It functions in the pathway opine metabolism; mannopine biosynthesis. Functionally, reduces deoxy-fructosyl-glutamine to mannopine. This chain is Agropine synthesis reductase (mas1), found in Rhizobium rhizogenes (Agrobacterium rhizogenes).